Reading from the N-terminus, the 494-residue chain is UPF0371 protein STER_1332 (494 aa).

It belongs to the UPF0371 family.

In Streptococcus thermophilus (strain ATCC BAA-491 / LMD-9), this protein is UPF0371 protein STER_1332.